Reading from the N-terminus, the 198-residue chain is Putative glutathione S-transferase alpha-5 (198 aa).

The 77-residue stretch at 2 to 78 folds into the GST N-terminal domain; it reads TKPTLTYFPV…YISEKHDFRG (77 aa). Glutathione-binding positions include Tyr8, Arg42, 49-50, and 62-63; these read QL and QT. The 119-residue stretch at 80–198 folds into the GST C-terminal domain; sequence TKEERARAHQ…YLESRPQSNF (119 aa).

The protein belongs to the GST superfamily. Alpha family.

It carries out the reaction RX + glutathione = an S-substituted glutathione + a halide anion + H(+). Its function is as follows. Conjugation of reduced glutathione to a wide number of exogenous and endogenous hydrophobic electrophiles. In Dictyostelium discoideum (Social amoeba), this protein is Putative glutathione S-transferase alpha-5 (gsta5).